The chain runs to 292 residues: Putative sugar lactone lactonase YvrE (292 aa).

Glu-15, Asn-146, and Asp-196 together coordinate a divalent metal cation.

Belongs to the SMP-30/CGR1 family. A divalent metal cation is required as a cofactor.

The protein localises to the cytoplasm. In Bacillus subtilis (strain 168), this protein is Putative sugar lactone lactonase YvrE (yvrE).